A 138-amino-acid chain; its full sequence is Basic phospholipase A2 homolog CTs-K49a (138 aa).

Residues 1–16 (MRTLWIMAVLLVVVEG) form the signal peptide. 6 disulfides stabilise this stretch: Cys-42-Cys-131, Cys-44-Cys-60, Cys-59-Cys-111, Cys-65-Cys-138, Cys-66-Cys-104, and Cys-91-Cys-102. Residues 121 to 133 (KKKKINLKLFCKK) are important for membrane-damaging activities in eukaryotes and bacteria; heparin-binding.

The protein belongs to the phospholipase A2 family. Group II subfamily. K49 sub-subfamily. In terms of tissue distribution, expressed by the venom gland.

The protein resides in the secreted. Its function is as follows. Snake venom phospholipase A2 homolog that lacks catalytic activity. It shows myotoxic and weak anticoagulant activities. A model of myotoxic mechanism has been proposed: an apo Lys49-PLA2 is activated by the entrance of a hydrophobic molecule (e.g. fatty acid) at the hydrophobic channel of the protein leading to a reorientation of a monomer. This reorientation causes a transition between 'inactive' to 'active' states, causing alignment of C-terminal and membrane-docking sites (MDoS) side-by-side and putting the membrane-disruption sites (MDiS) in the same plane, exposed to solvent and in a symmetric position for both monomers. The MDoS region stabilizes the toxin on membrane by the interaction of charged residues with phospholipid head groups. Subsequently, the MDiS region destabilizes the membrane with penetration of hydrophobic residues. This insertion causes a disorganization of the membrane, allowing an uncontrolled influx of ions (i.e. calcium and sodium), and eventually triggering irreversible intracellular alterations and cell death. The chain is Basic phospholipase A2 homolog CTs-K49a from Trimeresurus stejnegeri (Chinese green tree viper).